A 279-amino-acid chain; its full sequence is Phosphonoacetaldehyde hydrolase (279 aa).

Asp20 serves as the catalytic Nucleophile. Positions 20 and 22 each coordinate Mg(2+). Lys62 functions as the Schiff-base intermediate with substrate in the catalytic mechanism. Asp196 contacts Mg(2+).

Belongs to the HAD-like hydrolase superfamily. PhnX family. As to quaternary structure, homodimer. The cofactor is Mg(2+).

The enzyme catalyses phosphonoacetaldehyde + H2O = acetaldehyde + phosphate + H(+). Functionally, involved in phosphonate degradation. The chain is Phosphonoacetaldehyde hydrolase from Aeromonas hydrophila subsp. hydrophila (strain ATCC 7966 / DSM 30187 / BCRC 13018 / CCUG 14551 / JCM 1027 / KCTC 2358 / NCIMB 9240 / NCTC 8049).